The chain runs to 92 residues: Muscle LIM protein 1 (92 aa).

An LIM zinc-binding domain is found at 11–62; the sequence is CPACGKSVYAAEERVAGGYKFHKTCFKCSMCNKALDSTNCTEHEKELFCKNC. A Nuclear localization signal motif is present at residues 65–70; that stretch reads RKYGPK.

As to expression, in the embryo, expression is restricted to the somatic, visceral, and pharyngeal muscles. Within the somatic musculature, MLP60 is distributed throughout the muscle fibers. There is no expression in cardiac mesoderm or in fat body.

It is found in the cytoplasm. The protein resides in the nucleus. Its function is as follows. Positive regulator of myogenesis. This Drosophila melanogaster (Fruit fly) protein is Muscle LIM protein 1 (Mlp60A).